Here is an 840-residue protein sequence, read N- to C-terminus: Homeobox-leucine zipper protein HOX9 (840 aa).

Disordered stretches follow at residues 1–26 and 135–160; these read MAAA…AGMD and NPSL…DASN. Gly residues predominate over residues 12-21; the sequence is GSDGGGGGYD. The homeobox DNA-binding region spans 26–89; that stretch reads DSGKYVRYTP…NRRCRDKQRK (64 aa). Positions 86–135 form a coiled coil; it reads KQRKEASRLQAVNRKLTAMNKLLMEENERLQKQVSQLVHENAYMKQQLQN. The START domain maps to 157-385; that stretch reads DASNPSGLLT…IAQETSGEVV (229 aa).

This sequence belongs to the HD-ZIP homeobox family. Class III subfamily. As to expression, expressed in seedlings, roots, stems, leaf sheaths and blades and panicles.

It is found in the nucleus. In terms of biological role, probable transcription factor. The chain is Homeobox-leucine zipper protein HOX9 (HOX9) from Oryza sativa subsp. indica (Rice).